The sequence spans 328 residues: Transcriptional regulator protein Pur-beta-B (328 aa).

Disordered stretches follow at residues 1–35 (MADGDSGSERGGSSGGPSGFSQHMSREQETQELAS), 100–124 (SPEQIAQASGEDGAGGPGGPRRALK), and 289–328 (QERQRDKMYDRRGPGERGGSLGPGAGGGGDDSETEDVDDD). Position 2 is an N-acetylalanine (Ala-2). Over residues 9–18 (ERGGSSGGPS) the composition is skewed to gly residues. Positions 24-35 (MSREQETQELAS) are enriched in basic and acidic residues. Residues 27 to 260 (EQETQELASK…LRVSEVKPSY (234 aa)) form a DNA-binding region. Residues 289-303 (QERQRDKMYDRRGPG) show a composition bias toward basic and acidic residues. Positions 304-317 (ERGGSLGPGAGGGG) are enriched in gly residues. The segment covering 318 to 328 (DDSETEDVDDD) has biased composition (acidic residues).

It belongs to the PUR DNA-binding protein family.

Its subcellular location is the nucleus. Functionally, transcriptional regulator which can act as an activator or a repressor. The sequence is that of Transcriptional regulator protein Pur-beta-B (purb-b) from Xenopus laevis (African clawed frog).